The primary structure comprises 498 residues: Probable malate:quinone oxidoreductase 2 (498 aa).

The protein belongs to the MQO family. FAD serves as cofactor.

It catalyses the reaction (S)-malate + a quinone = a quinol + oxaloacetate. It functions in the pathway carbohydrate metabolism; tricarboxylic acid cycle; oxaloacetate from (S)-malate (quinone route): step 1/1. This is Probable malate:quinone oxidoreductase 2 from Staphylococcus aureus (strain COL).